A 1270-amino-acid polypeptide reads, in one-letter code: DNA-directed RNA polymerase subunit beta (1270 aa).

It belongs to the RNA polymerase beta chain family. As to quaternary structure, the RNAP catalytic core consists of 2 alpha, 1 beta, 1 beta' and 1 omega subunit. When a sigma factor is associated with the core the holoenzyme is formed, which can initiate transcription.

The enzyme catalyses RNA(n) + a ribonucleoside 5'-triphosphate = RNA(n+1) + diphosphate. In terms of biological role, DNA-dependent RNA polymerase catalyzes the transcription of DNA into RNA using the four ribonucleoside triphosphates as substrates. This chain is DNA-directed RNA polymerase subunit beta, found in Flavobacterium johnsoniae (strain ATCC 17061 / DSM 2064 / JCM 8514 / BCRC 14874 / CCUG 350202 / NBRC 14942 / NCIMB 11054 / UW101) (Cytophaga johnsonae).